The chain runs to 275 residues: 4-diphosphocytidyl-2-C-methyl-D-erythritol kinase (275 aa).

Lysine 8 is a catalytic residue. 86–96 (PEGAGLGGGSS) lines the ATP pocket. Aspartate 125 is a catalytic residue.

The protein belongs to the GHMP kinase family. IspE subfamily.

The enzyme catalyses 4-CDP-2-C-methyl-D-erythritol + ATP = 4-CDP-2-C-methyl-D-erythritol 2-phosphate + ADP + H(+). It participates in isoprenoid biosynthesis; isopentenyl diphosphate biosynthesis via DXP pathway; isopentenyl diphosphate from 1-deoxy-D-xylulose 5-phosphate: step 3/6. In terms of biological role, catalyzes the phosphorylation of the position 2 hydroxy group of 4-diphosphocytidyl-2C-methyl-D-erythritol. This chain is 4-diphosphocytidyl-2-C-methyl-D-erythritol kinase, found in Thermus thermophilus (strain ATCC BAA-163 / DSM 7039 / HB27).